Here is a 168-residue protein sequence, read N- to C-terminus: Ubiquitin-conjugating enzyme E2 7 (168 aa).

The disordered stretch occupies residues 1–21 (MATAPARRASSSRSSSEISRT). The 161-residue stretch at 6–166 (ARRASSSRSS…VRRAVRKSQE (161 aa)) folds into the UBC core domain. C92 (glycyl thioester intermediate) is an active-site residue.

This sequence belongs to the ubiquitin-conjugating enzyme family.

It carries out the reaction S-ubiquitinyl-[E1 ubiquitin-activating enzyme]-L-cysteine + [E2 ubiquitin-conjugating enzyme]-L-cysteine = [E1 ubiquitin-activating enzyme]-L-cysteine + S-ubiquitinyl-[E2 ubiquitin-conjugating enzyme]-L-cysteine.. The protein operates within protein modification; protein ubiquitination. In terms of biological role, catalyzes the covalent attachment of ubiquitin to other proteins so as to signal them for selective protein degradation. Involved in the formation of multiubiquitin chains. In Triticum aestivum (Wheat), this protein is Ubiquitin-conjugating enzyme E2 7 (UBC7).